The following is a 201-amino-acid chain: E3 ubiquitin-protein ligase LAP (201 aa).

The Cytoplasmic portion of the chain corresponds to Met-1–Asn-92. The RING-CH-type zinc finger occupies Asp-9–Lys-69. Residues Cys-17, Cys-20, Cys-31, Cys-33, His-41, Cys-44, Cys-59, and Cys-62 each coordinate Zn(2+). The chain crosses the membrane as a helical span at residues Leu-93 to Ile-113. The Lumenal segment spans residues Lys-114–Glu-123. Residues Leu-124–Ala-144 form a helical membrane-spanning segment. Over Leu-145–Asn-201 the chain is Cytoplasmic. Residues Gln-168–Tyr-188 are disordered. The segment covering Glu-169–Tyr-188 has biased composition (acidic residues).

It belongs to the poxviridae LAP protein family.

Its subcellular location is the host membrane. The protein resides in the host Golgi apparatus. The protein localises to the host trans-Golgi network membrane. It is found in the host early endosome membrane. The enzyme catalyses S-ubiquitinyl-[E2 ubiquitin-conjugating enzyme]-L-cysteine + [acceptor protein]-L-lysine = [E2 ubiquitin-conjugating enzyme]-L-cysteine + N(6)-ubiquitinyl-[acceptor protein]-L-lysine.. Functionally, E3 ubiquitin-protein ligase which promotes ubiquitination and subsequent degradation of host MHC-I and CD4 molecules, presumably to prevent lysis of infected cells by cytotoxic T-lymphocytes and NK cell. Binds target molecules through transmembrane interaction. The result of this ubiquitination is the enhancement of the endocytosis of the target chain and the delivery to the lysosome, where it is proteolytically destroyed. The sequence is that of E3 ubiquitin-protein ligase LAP from Oryctolagus cuniculus (Rabbit).